Consider the following 506-residue polypeptide: MDLLLLEKALLGLFAAAVVAIAVSKLRGKRFKLPPGPLGFPVFGNWLQVGDDLNQRKLANLSKKFGDVYLLRMGQRNLVVVSSPEMAKEVLHTQGVEFGSRTRNVVFDIFTGKGQDMVFTVYSEHWRKMRRIMTVPFFTNKVVQQQRFNWEDEAARVVEDVKKDPQAATTGIVLRRRLQLLMYNNMYRIMFDRRFESVDDPLFNKLKALNGERSRLAQSFEYNYGDFIPILRPFLRGYLKLVKEVKERRLKLFKDYFVEERKKLTSTKSMTEENFKCAIDHVLDAQQKGEINEDNVLYIVENINVAAIETTLWSIEWGIAELVNHPDIQKKLRAEIDRVLGPDHQITEPDTHKLPYLQAVIKETLRLRMAIPLLVPHMNLNDAKLAGYDIPAESKILVNAWWLANNPAHWKDPQVFRPERFLEEESGVEANGNDFRYIPFGVGRRSCPGIILALPILGITIGRMVQNFELLPPPGQSKIDTSEKGGQFSLFILNHSTIVLKPRSSV.

Residues 3–23 (LLLLEKALLGLFAAAVVAIAV) form a helical membrane-spanning segment. (E)-cinnamate-binding positions include 213–218 (RSRLAQ) and Ala306. Cys447 serves as a coordination point for heme.

It belongs to the cytochrome P450 family. Heme is required as a cofactor.

It is found in the membrane. It catalyses the reaction (E)-cinnamate + reduced [NADPH--hemoprotein reductase] + O2 = (E)-4-coumarate + oxidized [NADPH--hemoprotein reductase] + H2O + H(+). It participates in phenylpropanoid metabolism; trans-4-coumarate biosynthesis; trans-4-coumarate from trans-cinnamate: step 1/1. Its function is as follows. Catalyzes the first oxidative step of the phenylpropanoid pathway in higher plants by transforming trans-cinnamate into p-coumarate. The compounds formed by this pathway are essential components for lignification, pollination, and defense against ultraviolet light, predators and pathogens. This chain is Trans-cinnamate 4-monooxygenase (CYP73A2), found in Ruta graveolens (Common rue).